A 550-amino-acid chain; its full sequence is Warthog protein 8 (550 aa).

Positions 1-19 (MNYLLLVSGLLSVWQPVFG) are cleaved as a signal peptide.

The protein belongs to the hedgehog family. Post-translationally, the C-terminal domain displays an autoproteolysis activity.

It localises to the secreted. Its subcellular location is the cell surface. It is found in the cell membrane. The protein localises to the extracellular space. In terms of biological role, intercellular signal essential for a variety of patterning events during development. This is Warthog protein 8 (wrt-8) from Caenorhabditis elegans.